Here is a 326-residue protein sequence, read N- to C-terminus: Tetraacyldisaccharide 4'-kinase (326 aa).

54 to 61 provides a ligand contact to ATP; the sequence is SVGGTGKT.

It belongs to the LpxK family.

It catalyses the reaction a lipid A disaccharide + ATP = a lipid IVA + ADP + H(+). The protein operates within glycolipid biosynthesis; lipid IV(A) biosynthesis; lipid IV(A) from (3R)-3-hydroxytetradecanoyl-[acyl-carrier-protein] and UDP-N-acetyl-alpha-D-glucosamine: step 6/6. Its function is as follows. Transfers the gamma-phosphate of ATP to the 4'-position of a tetraacyldisaccharide 1-phosphate intermediate (termed DS-1-P) to form tetraacyldisaccharide 1,4'-bis-phosphate (lipid IVA). The protein is Tetraacyldisaccharide 4'-kinase of Rickettsia canadensis (strain McKiel).